A 194-amino-acid polypeptide reads, in one-letter code: GTP cyclohydrolase 1 (194 aa).

The Zn(2+) site is built by cysteine 83, histidine 86, and cysteine 155.

It belongs to the GTP cyclohydrolase I family. In terms of assembly, homomer.

It carries out the reaction GTP + H2O = 7,8-dihydroneopterin 3'-triphosphate + formate + H(+). Its pathway is cofactor biosynthesis; 7,8-dihydroneopterin triphosphate biosynthesis; 7,8-dihydroneopterin triphosphate from GTP: step 1/1. The chain is GTP cyclohydrolase 1 from Streptococcus pyogenes serotype M49 (strain NZ131).